The chain runs to 45 residues: Bomanin Short 2 (45 aa).

An N-terminal signal peptide occupies residues 1–20 (MKFFSVVTVFVFGLLALANA). Residues 21–27 (VPLSPDP) constitute a propeptide, removed by a dipeptidylpeptidase. Cysteine 36 and cysteine 39 form a disulfide bridge. Glycine 43 is modified (glycine amide).

Hemolymph (at protein level).

The protein localises to the secreted. In terms of biological role, secreted immune-induced peptide induced by Toll signaling. Has a role in resistance to bacterial and fungal infections. The sequence is that of Bomanin Short 2 from Drosophila melanogaster (Fruit fly).